The chain runs to 278 residues: Large ribosomal subunit protein uL2 (278 aa).

2 disordered regions span residues 32 to 54 and 221 to 278; these read SLCR…TRHI and RGMT…RNAK. Over residues 232–245 the composition is skewed to gly residues; it reads NGGGEGKSKSGGGR.

This sequence belongs to the universal ribosomal protein uL2 family. Part of the 50S ribosomal subunit. Forms a bridge to the 30S subunit in the 70S ribosome.

In terms of biological role, one of the primary rRNA binding proteins. Required for association of the 30S and 50S subunits to form the 70S ribosome, for tRNA binding and peptide bond formation. It has been suggested to have peptidyltransferase activity; this is somewhat controversial. Makes several contacts with the 16S rRNA in the 70S ribosome. The chain is Large ribosomal subunit protein uL2 from Akkermansia muciniphila (strain ATCC BAA-835 / DSM 22959 / JCM 33894 / BCRC 81048 / CCUG 64013 / CIP 107961 / Muc).